Consider the following 471-residue polypeptide: ATP synthase subunit beta (471 aa).

156–163 (GGAGVGKT) is a binding site for ATP.

It belongs to the ATPase alpha/beta chains family. F-type ATPases have 2 components, CF(1) - the catalytic core - and CF(0) - the membrane proton channel. CF(1) has five subunits: alpha(3), beta(3), gamma(1), delta(1), epsilon(1). CF(0) has three main subunits: a(1), b(2) and c(9-12). The alpha and beta chains form an alternating ring which encloses part of the gamma chain. CF(1) is attached to CF(0) by a central stalk formed by the gamma and epsilon chains, while a peripheral stalk is formed by the delta and b chains.

The protein localises to the cell membrane. It catalyses the reaction ATP + H2O + 4 H(+)(in) = ADP + phosphate + 5 H(+)(out). Functionally, produces ATP from ADP in the presence of a proton gradient across the membrane. The catalytic sites are hosted primarily by the beta subunits. The chain is ATP synthase subunit beta from Mycoplasmoides gallisepticum (strain R(low / passage 15 / clone 2)) (Mycoplasma gallisepticum).